The primary structure comprises 201 residues: Potassium-transporting ATPase KdpC subunit (201 aa).

The chain crosses the membrane as a helical span at residues 7 to 27 (PAIVLLLVLTAITGLAYPLAM).

It belongs to the KdpC family. The system is composed of three essential subunits: KdpA, KdpB and KdpC.

The protein resides in the cell inner membrane. Part of the high-affinity ATP-driven potassium transport (or Kdp) system, which catalyzes the hydrolysis of ATP coupled with the electrogenic transport of potassium into the cytoplasm. This subunit acts as a catalytic chaperone that increases the ATP-binding affinity of the ATP-hydrolyzing subunit KdpB by the formation of a transient KdpB/KdpC/ATP ternary complex. This is Potassium-transporting ATPase KdpC subunit from Bradyrhizobium diazoefficiens (strain JCM 10833 / BCRC 13528 / IAM 13628 / NBRC 14792 / USDA 110).